The chain runs to 593 residues: ATPase family AAA domain-containing protein 3-B (593 aa).

Disordered stretches follow at residues 1–64 (MSWL…LDQS), 109–129 (EEKR…AQYQ), and 145–164 (QLQN…KQEA). The Mitochondrial intermembrane portion of the chain corresponds to 1–242 (MSWLFGLNRG…FRTFISDWDK (242 aa)). The span at 12 to 27 (PEPPGVPGFPEPPSPP) shows a compositional bias: pro residues. 4 stretches are compositionally biased toward basic and acidic residues: residues 33-44 (GGDKNRPKDKWS), 53-64 (RAAKAARELDQS), 109-121 (EEKR…ETKQ), and 150-164 (ENLR…KQEA). Residues 51–215 (LERAAKAARE…QIRLKAAEHR (165 aa)) adopt a coiled-coil conformation. A helical membrane pass occupies residues 243–260 (VTATVAGLTLLAVGVYTA). Residues 261-593 (KNGTGVAGRY…LQPLLEGTPV (333 aa)) lie on the Mitochondrial matrix side of the membrane. An ATP-binding site is contributed by 348–355 (GPPGTGKT). Residues 570-580 (AEGKESTKEIG) are compositionally biased toward basic and acidic residues. The segment at 570 to 593 (AEGKESTKEIGKNPLQPLLEGTPV) is disordered.

The protein belongs to the AAA ATPase family. Can form homooligomers. Homodimer formation at the N-terminus may be regulated by ATP and is required for the interaction with the inner surface of the mitochondrial outer membrane and correct mitochondrial homeostasis.

The protein localises to the mitochondrion inner membrane. Its subcellular location is the mitochondrion matrix. It localises to the mitochondrion nucleoid. The enzyme catalyses ATP + H2O = ADP + phosphate + H(+). Essential for mitochondrial network organization, mitochondrial metabolism and cell growth at organism and cellular level. May play an important role in mitochondrial protein synthesis. May also participate in mitochondrial DNA replication. May bind to mitochondrial DNA D-loops and contribute to nucleoid stability. Required for enhanced channeling of cholesterol for hormone-dependent steroidogenesis. Involved in mitochondrial-mediated antiviral innate immunity. Required to protect mitochondria from the PERK-mediated unfolded protein response: specifically inhibits the activity of EIF2AK3/PERK at mitochondria-endoplasmic reticulum contact sites, thereby providing a safe haven for mitochondrial protein translation during endoplasmic reticulum stress. Ability to inhibit EIF2AK3/PERK is independent of its ATPase activity. Also involved in the mitochondrial DNA damage response by promoting signaling between damaged genomes and the mitochondrial membrane, leading to activation of the integrated stress response (ISR). This is ATPase family AAA domain-containing protein 3-B (atad3-b) from Xenopus laevis (African clawed frog).